Reading from the N-terminus, the 332-residue chain is Glycerol-3-phosphate dehydrogenase [NAD(P)+] (332 aa).

Positions 11, 30, and 108 each coordinate NADPH. Residues Lys-108, Gly-137, and Ser-139 each contribute to the sn-glycerol 3-phosphate site. Residue Ala-141 participates in NADPH binding. Lys-192, Asp-245, Ser-255, Arg-256, and Asn-257 together coordinate sn-glycerol 3-phosphate. Lys-192 (proton acceptor) is an active-site residue. Residue Arg-256 coordinates NADPH. Val-280 and Glu-282 together coordinate NADPH.

It belongs to the NAD-dependent glycerol-3-phosphate dehydrogenase family.

Its subcellular location is the cytoplasm. The catalysed reaction is sn-glycerol 3-phosphate + NAD(+) = dihydroxyacetone phosphate + NADH + H(+). It carries out the reaction sn-glycerol 3-phosphate + NADP(+) = dihydroxyacetone phosphate + NADPH + H(+). It functions in the pathway membrane lipid metabolism; glycerophospholipid metabolism. Catalyzes the reduction of the glycolytic intermediate dihydroxyacetone phosphate (DHAP) to sn-glycerol 3-phosphate (G3P), the key precursor for phospholipid synthesis. The chain is Glycerol-3-phosphate dehydrogenase [NAD(P)+] from Burkholderia mallei (strain ATCC 23344).